The sequence spans 354 residues: UDP-N-acetylglucosamine--N-acetylmuramyl-(pentapeptide) pyrophosphoryl-undecaprenol N-acetylglucosamine transferase (354 aa).

Residues 11–13, Arg-164, Ser-194, and Gln-289 each bind UDP-N-acetyl-alpha-D-glucosamine; that span reads TAG.

It belongs to the glycosyltransferase 28 family. MurG subfamily.

Its subcellular location is the cell membrane. The catalysed reaction is di-trans,octa-cis-undecaprenyl diphospho-N-acetyl-alpha-D-muramoyl-L-alanyl-D-glutamyl-meso-2,6-diaminopimeloyl-D-alanyl-D-alanine + UDP-N-acetyl-alpha-D-glucosamine = di-trans,octa-cis-undecaprenyl diphospho-[N-acetyl-alpha-D-glucosaminyl-(1-&gt;4)]-N-acetyl-alpha-D-muramoyl-L-alanyl-D-glutamyl-meso-2,6-diaminopimeloyl-D-alanyl-D-alanine + UDP + H(+). Its pathway is cell wall biogenesis; peptidoglycan biosynthesis. In terms of biological role, cell wall formation. Catalyzes the transfer of a GlcNAc subunit on undecaprenyl-pyrophosphoryl-MurNAc-pentapeptide (lipid intermediate I) to form undecaprenyl-pyrophosphoryl-MurNAc-(pentapeptide)GlcNAc (lipid intermediate II). This Clostridium botulinum (strain 657 / Type Ba4) protein is UDP-N-acetylglucosamine--N-acetylmuramyl-(pentapeptide) pyrophosphoryl-undecaprenol N-acetylglucosamine transferase.